The chain runs to 171 residues: CASP-like protein 0U2 (171 aa).

Topologically, residues 1-22 are cytoplasmic; sequence MPVFGLAALKLNWEALSTPKFR. The helical transmembrane segment at 23-42 threads the bilayer; it reads VTFAQWVCSLLMWSLMASYS. Residues 43–48 are Extracellular-facing; sequence KHGEFK. A helical membrane pass occupies residues 49–69; it reads FVVVFGLVMWGLASTYLVYQL. The Cytoplasmic segment spans residues 70–77; that stretch reads LNGPPLAP. The chain crosses the membrane as a helical span at residues 78 to 98; it reads IVEFWANVAAGSLAFICLVLA. The Extracellular portion of the chain corresponds to 99-121; sequence SATCNRAVGEPQTKVCSGELKPK. Residues 122-142 traverse the membrane as a helical segment; sequence ASAAFAFLLLCAYGGLAYLSW. Topologically, residues 143–171 are cytoplasmic; the sequence is RTWRNPPTIASYALHDDPEFAQPLHSSHK.

The protein belongs to the Casparian strip membrane proteins (CASP) family. As to quaternary structure, homodimer and heterodimers.

The protein resides in the cell membrane. The sequence is that of CASP-like protein 0U2 from Chlorokybus atmophyticus (Soil alga).